Here is a 377-residue protein sequence, read N- to C-terminus: Prostaglandin E synthase 2 (377 aa).

Residues 1–57 (MDPAARVVRALWPGGCALAWRLGGRPQPLLPTQSRAGFAGAAGGPSPVAAARKGSPR) lie on the Lumenal side of the membrane. Residues 58–74 (LLGAAALALGGALGLYH) form a helical membrane-spanning segment. At 75 to 377 (TARWHLRAQD…RAITEASPAH (303 aa)) the chain is on the cytoplasmic side. Residues 90 to 193 (SAAQLSLSSR…EIITYYPAMK (104 aa)) enclose the Glutaredoxin domain. Position 95 is a phosphoserine (S95). Residues V148 and 164–165 (DS) contribute to the glutathione site. Residues 263–377 (YIVREGKFGA…RAITEASPAH (115 aa)) form the GST C-terminal domain.

Belongs to the GST superfamily. Homodimer. May interact with CEBPB. Interacts with EXOSC10. Post-translationally, synthesized as a Golgi membrane-associated protein, and the proteolytic removal of the N-terminal hydrophobic domain leads to the formation of a mature cytosolic enzyme. Widely expressed. Expressed in the heart, including apex, inter-ventricular septum, both atria and ventricles, but not in the aorta. Also expressed in fetal heart. Detected in various regions of the brain: cerebellum; occipital, frontal and parietal lobes. Also expressed in the lymph nodes, skeletal muscle, kidney and trachea, but not in the thymus or lung. Overexpressed in colorectal cancer.

It localises to the golgi apparatus membrane. It is found in the cytoplasm. The protein resides in the perinuclear region. The catalysed reaction is prostaglandin H2 = prostaglandin E2. The enzyme catalyses prostaglandin H2 = (12S)-hydroxy-(5Z,8E,10E)-heptadecatrienoate + malonaldehyde. Its pathway is lipid metabolism; prostaglandin biosynthesis. Its activity is regulated as follows. Isomerase activity is increased by sulfhydril compounds. Dithiothreitol (DTT) is most effective, followed by dihydrolipoic acid, glutathione (GSH) and 2-mercaptoethanol. Isomerase that catalyzes the conversion of PGH2 into the more stable prostaglandin E2 (PGE2) (in vitro). The biological function and the GSH-dependent property of PTGES2 is still under debate. In vivo, PTGES2 could form a complex with GSH and heme and would not participate in PGE2 synthesis but would catalyze the degradation of prostaglandin E2 H2 (PGH2) to 12(S)-hydroxy-5(Z),8(E),10(E)-heptadecatrienoic acid (HHT) and malondialdehyde (MDA). The sequence is that of Prostaglandin E synthase 2 (PTGES2) from Homo sapiens (Human).